The chain runs to 553 residues: Putative transport protein CKO_00031 (553 aa).

A run of 5 helical transmembrane segments spans residues 4 to 24, 28 to 48, 65 to 85, 95 to 115, and 158 to 178; these read IALT…IGNI, GVGF…HFVD, FGLI…FFAS, LFAI…HKIF, and MSYA…MWLM. 2 consecutive RCK C-terminal domains span residues 192-276 and 279-361; these read QHED…VIGQ and DTSL…VVGN. 6 helical membrane passes run 371-391, 393-413, 437-457, 464-484, 493-513, and 533-553; these read MLPV…PLFV, GFPV…ALIL, LGIV…FIDT, LSWI…VGLL, YLTL…LAFA, and LVMF…WGLG.

Belongs to the AAE transporter (TC 2.A.81) family. YidE subfamily.

The protein localises to the cell membrane. In Citrobacter koseri (strain ATCC BAA-895 / CDC 4225-83 / SGSC4696), this protein is Putative transport protein CKO_00031.